Here is an 85-residue protein sequence, read N- to C-terminus: Toxin BmKaTx10 (85 aa).

An N-terminal signal peptide occupies residues 1–19; it reads MNYLVMVSFALLLMTGVES. Residues 21-83 form the LCN-type CS-alpha/beta domain; it reads RDGYIALPHN…VPIRVPGRCH (63 aa). 4 cysteine pairs are disulfide-bonded: Cys-31–Cys-82, Cys-35–Cys-55, Cys-41–Cys-65, and Cys-45–Cys-67.

The protein belongs to the long (4 C-C) scorpion toxin superfamily. Sodium channel inhibitor family. Alpha subfamily. As to expression, expressed by the venom gland.

The protein localises to the secreted. Alpha toxins bind voltage-independently at site-3 of sodium channels (Nav) and inhibit the inactivation of the activated channels, thereby blocking neuronal transmission. This chain is Toxin BmKaTx10, found in Olivierus martensii (Manchurian scorpion).